Reading from the N-terminus, the 228-residue chain is Cytidylate kinase (228 aa).

10 to 18 is an ATP binding site; it reads GPSGSGKGT.

This sequence belongs to the cytidylate kinase family. Type 1 subfamily.

Its subcellular location is the cytoplasm. The catalysed reaction is CMP + ATP = CDP + ADP. The enzyme catalyses dCMP + ATP = dCDP + ADP. The polypeptide is Cytidylate kinase (Acinetobacter baumannii (strain ACICU)).